The sequence spans 245 residues: tRNA1(Val) (adenine(37)-N6)-methyltransferase (245 aa).

It belongs to the methyltransferase superfamily. tRNA (adenine-N(6)-)-methyltransferase family.

The protein localises to the cytoplasm. It carries out the reaction adenosine(37) in tRNA1(Val) + S-adenosyl-L-methionine = N(6)-methyladenosine(37) in tRNA1(Val) + S-adenosyl-L-homocysteine + H(+). Functionally, specifically methylates the adenine in position 37 of tRNA(1)(Val) (anticodon cmo5UAC). This is tRNA1(Val) (adenine(37)-N6)-methyltransferase from Escherichia coli (strain UTI89 / UPEC).